The following is a 146-amino-acid chain: Vascular endothelial growth factor A (146 aa).

An N-terminal signal peptide occupies residues 1–26 (MNFLLSWVHWSLALLLYLHHAKWSQA). Disulfide bonds link cysteine 51/cysteine 93, cysteine 82/cysteine 127, and cysteine 86/cysteine 129. Residue asparagine 100 is glycosylated (N-linked (GlcNAc...) asparagine).

The protein belongs to the PDGF/VEGF growth factor family. Homodimer; disulfide-linked. Also found as heterodimer with PGF. Interacts with NRP1. Interacts with isoform 2 of BSG. Interacts with CD82; this interaction inhibits VEGFA-mediated signaling pathway.

Growth factor active in angiogenesis, vasculogenesis and endothelial cell growth. Induces endothelial cell proliferation, promotes cell migration, inhibits apoptosis and induces permeabilization of blood vessels. Binds to the FLT1/VEGFR1 and KDR/VEGFR2 receptors, heparan sulfate and heparin. Binding to NRP1 receptor initiates a signaling pathway needed for motor neuron axon guidance and cell body migration, including for the caudal migration of facial motor neurons from rhombomere 4 to rhombomere 6 during embryonic development. Also binds the DEAR/FBXW7-AS1 receptor. This Ovis aries (Sheep) protein is Vascular endothelial growth factor A (VEGFA).